We begin with the raw amino-acid sequence, 361 residues long: Phosphoserine aminotransferase (361 aa).

Arg42 serves as a coordination point for L-glutamate. Residues Ala76 to Arg77, Trp102, Thr153, Asp173, and Gln196 contribute to the pyridoxal 5'-phosphate site. Position 197 is an N6-(pyridoxal phosphate)lysine (Lys197). A pyridoxal 5'-phosphate-binding site is contributed by Asn238–Thr239.

Belongs to the class-V pyridoxal-phosphate-dependent aminotransferase family. SerC subfamily. As to quaternary structure, homodimer. Requires pyridoxal 5'-phosphate as cofactor.

It is found in the cytoplasm. It catalyses the reaction O-phospho-L-serine + 2-oxoglutarate = 3-phosphooxypyruvate + L-glutamate. The enzyme catalyses 4-(phosphooxy)-L-threonine + 2-oxoglutarate = (R)-3-hydroxy-2-oxo-4-phosphooxybutanoate + L-glutamate. It participates in amino-acid biosynthesis; L-serine biosynthesis; L-serine from 3-phospho-D-glycerate: step 2/3. It functions in the pathway cofactor biosynthesis; pyridoxine 5'-phosphate biosynthesis; pyridoxine 5'-phosphate from D-erythrose 4-phosphate: step 3/5. Catalyzes the reversible conversion of 3-phosphohydroxypyruvate to phosphoserine and of 3-hydroxy-2-oxo-4-phosphonooxybutanoate to phosphohydroxythreonine. This chain is Phosphoserine aminotransferase, found in Pectobacterium atrosepticum (strain SCRI 1043 / ATCC BAA-672) (Erwinia carotovora subsp. atroseptica).